A 489-amino-acid chain; its full sequence is Lysine--tRNA ligase (489 aa).

Mg(2+)-binding residues include glutamate 399 and glutamate 406.

It belongs to the class-II aminoacyl-tRNA synthetase family. Homodimer. The cofactor is Mg(2+).

It localises to the cytoplasm. It carries out the reaction tRNA(Lys) + L-lysine + ATP = L-lysyl-tRNA(Lys) + AMP + diphosphate. The sequence is that of Lysine--tRNA ligase from Roseiflexus sp. (strain RS-1).